A 219-amino-acid polypeptide reads, in one-letter code: ATP synthase F(0) complex subunit a (219 aa).

Helical transmembrane passes span P4 to P24, W61 to L81, Q90 to M110, E124 to I144, F172 to L192, and L194 to Y214.

This sequence belongs to the ATPase A chain family. As to quaternary structure, component of the ATP synthase complex composed at least of ATP5F1A/subunit alpha, ATP5F1B/subunit beta, ATP5MC1/subunit c (homooctomer), MT-ATP6/subunit a, MT-ATP8/subunit 8, ATP5ME/subunit e, ATP5MF/subunit f, ATP5MG/subunit g, ATP5MK/subunit k, ATP5MJ/subunit j, ATP5F1C/subunit gamma, ATP5F1D/subunit delta, ATP5F1E/subunit epsilon, ATP5PF/subunit F6, ATP5PB/subunit b, ATP5PD/subunit d, ATP5PO/subunit OSCP. ATP synthase complex consists of a soluble F(1) head domain (subunits alpha(3) and beta(3)) - the catalytic core - and a membrane F(0) domain - the membrane proton channel (subunits c, a, 8, e, f, g, k and j). These two domains are linked by a central stalk (subunits gamma, delta, and epsilon) rotating inside the F1 region and a stationary peripheral stalk (subunits F6, b, d, and OSCP). Interacts with DNAJC30; interaction is direct.

The protein resides in the mitochondrion inner membrane. The catalysed reaction is H(+)(in) = H(+)(out). Functionally, subunit a, of the mitochondrial membrane ATP synthase complex (F(1)F(0) ATP synthase or Complex V) that produces ATP from ADP in the presence of a proton gradient across the membrane which is generated by electron transport complexes of the respiratory chain. ATP synthase complex consist of a soluble F(1) head domain - the catalytic core - and a membrane F(1) domain - the membrane proton channel. These two domains are linked by a central stalk rotating inside the F(1) region and a stationary peripheral stalk. During catalysis, ATP synthesis in the catalytic domain of F(1) is coupled via a rotary mechanism of the central stalk subunits to proton translocation. With the subunit c (ATP5MC1), forms the proton-conducting channel in the F(0) domain, that contains two crucial half-channels (inlet and outlet) that facilitate proton movement from the mitochondrial intermembrane space (IMS) into the matrix. Protons are taken up via the inlet half-channel and released through the outlet half-channel, following a Grotthuss mechanism. The protein is ATP synthase F(0) complex subunit a of Oncorhynchus masou (Cherry salmon).